The primary structure comprises 22 residues: Fuctinin-2 (22 aa).

The interval 1-22 (ELPGLPKGEKEQQEAIEHIDEV) is disordered. Residues 7-22 (KGEKEQQEAIEHIDEV) are compositionally biased toward basic and acidic residues.

To human SET/PHAPII protein. As to quaternary structure, oligomer.

It is found in the cytoplasm. Its function is as follows. Has a role in the physiological regulation of fucosylation processes. The protein is Fuctinin-2 of Rattus norvegicus (Rat).